We begin with the raw amino-acid sequence, 159 residues long: Ribosomal RNA large subunit methyltransferase H (159 aa).

S-adenosyl-L-methionine contacts are provided by residues leucine 76, glycine 108, and 127–132; that span reads FGRLTY.

Belongs to the RNA methyltransferase RlmH family. In terms of assembly, homodimer.

The protein localises to the cytoplasm. It catalyses the reaction pseudouridine(1915) in 23S rRNA + S-adenosyl-L-methionine = N(3)-methylpseudouridine(1915) in 23S rRNA + S-adenosyl-L-homocysteine + H(+). Functionally, specifically methylates the pseudouridine at position 1915 (m3Psi1915) in 23S rRNA. The sequence is that of Ribosomal RNA large subunit methyltransferase H from Enterococcus faecalis (strain ATCC 700802 / V583).